The primary structure comprises 281 residues: Protein phosphatase 2C homolog 1 (281 aa).

The PPM-type phosphatase domain occupies 20–281 (RVGVAENKNS…DNVTVMVVFL (262 aa)). Mn(2+)-binding residues include D58, G59, D233, and D272.

Belongs to the PP2C family. In terms of assembly, interacts with NBP2 and PBS2. Mg(2+) is required as a cofactor. The cofactor is Mn(2+).

It localises to the peroxisome. The catalysed reaction is O-phospho-L-seryl-[protein] + H2O = L-seryl-[protein] + phosphate. It carries out the reaction O-phospho-L-threonyl-[protein] + H2O = L-threonyl-[protein] + phosphate. In terms of biological role, serine and threonine phosphatase. Involved in tRNA splicing and cell separation. The sequence is that of Protein phosphatase 2C homolog 1 (PTC1) from Saccharomyces cerevisiae (strain ATCC 204508 / S288c) (Baker's yeast).